A 264-amino-acid polypeptide reads, in one-letter code: GTP cyclohydrolase FolE2 (264 aa).

This sequence belongs to the GTP cyclohydrolase IV family.

The catalysed reaction is GTP + H2O = 7,8-dihydroneopterin 3'-triphosphate + formate + H(+). It functions in the pathway cofactor biosynthesis; 7,8-dihydroneopterin triphosphate biosynthesis; 7,8-dihydroneopterin triphosphate from GTP: step 1/1. In terms of biological role, converts GTP to 7,8-dihydroneopterin triphosphate. The sequence is that of GTP cyclohydrolase FolE2 from Ruthia magnifica subsp. Calyptogena magnifica.